A 257-amino-acid polypeptide reads, in one-letter code: Thioredoxin-dependent peroxide reductase, mitochondrial (257 aa).

A mitochondrion-targeting transit peptide spans 1 to 62 (MAATAGRLFR…FAFSTSSSYH (62 aa)). Residues 64–222 (PAVTQHAPYF…TLRLVKAFQF (159 aa)) enclose the Thioredoxin domain. N6-succinyllysine is present on Lys-84. Lys-92 carries the N6-acetyllysine; alternate modification. Lys-92 carries the post-translational modification N6-succinyllysine; alternate. Cys-109 (cysteine sulfenic acid (-SOH) intermediate) is an active-site residue. A Phosphothreonine modification is found at Thr-147.

This sequence belongs to the peroxiredoxin family. AhpC/Prx1 subfamily. As to quaternary structure, homodimer; disulfide-linked, upon oxidation. 6 homodimers assemble to form a ring-like dodecamer. Interacts with NEK6. Interacts with LRRK2. Interacts with MAP3K13. Interacts with RPS6KC1 (via PX domain). Post-translationally, phosphorylated by LRRK2; phosphorylation reduces perodixase activity. The enzyme can be inactivated by further oxidation of the cysteine sulfenic acid (C(P)-SOH) to sulphinic acid (C(P)-SO2H) and sulphonic acid (C(P)-SO3H) instead of its condensation to a disulfide bond. In terms of processing, S-palmitoylated. Predominantly expressed in adrenal cortex. Also detected in liver, renal cortex and medulla, and adrenal medulla (at protein level).

The protein localises to the mitochondrion matrix. It localises to the cytoplasm. Its subcellular location is the early endosome. The catalysed reaction is a hydroperoxide + [thioredoxin]-dithiol = an alcohol + [thioredoxin]-disulfide + H2O. In terms of biological role, thiol-specific peroxidase that catalyzes the reduction of hydrogen peroxide and organic hydroperoxides to water and alcohols, respectively. Plays a role in cell protection against oxidative stress by detoxifying peroxides. Acts synergistically with MAP3K13 to regulate the activation of NF-kappa-B in the cytosol. Required for the maintenance of physical strength. The chain is Thioredoxin-dependent peroxide reductase, mitochondrial (PRDX3) from Bos taurus (Bovine).